Consider the following 387-residue polypeptide: Exodeoxyribonuclease 7 large subunit (387 aa).

This sequence belongs to the XseA family. Heterooligomer composed of large and small subunits.

The protein localises to the cytoplasm. The enzyme catalyses Exonucleolytic cleavage in either 5'- to 3'- or 3'- to 5'-direction to yield nucleoside 5'-phosphates.. Its function is as follows. Bidirectionally degrades single-stranded DNA into large acid-insoluble oligonucleotides, which are then degraded further into small acid-soluble oligonucleotides. The sequence is that of Exodeoxyribonuclease 7 large subunit from Campylobacter hominis (strain ATCC BAA-381 / DSM 21671 / CCUG 45161 / LMG 19568 / NCTC 13146 / CH001A).